A 196-amino-acid chain; its full sequence is FMN-dependent NADH:quinone oxidoreductase (196 aa).

Position 10 (serine 10) interacts with FMN.

It belongs to the azoreductase type 1 family. Homodimer. FMN is required as a cofactor.

The enzyme catalyses 2 a quinone + NADH + H(+) = 2 a 1,4-benzosemiquinone + NAD(+). It carries out the reaction N,N-dimethyl-1,4-phenylenediamine + anthranilate + 2 NAD(+) = 2-(4-dimethylaminophenyl)diazenylbenzoate + 2 NADH + 2 H(+). In terms of biological role, quinone reductase that provides resistance to thiol-specific stress caused by electrophilic quinones. Its function is as follows. Also exhibits azoreductase activity. Catalyzes the reductive cleavage of the azo bond in aromatic azo compounds to the corresponding amines. The polypeptide is FMN-dependent NADH:quinone oxidoreductase (Cereibacter sphaeroides (strain ATCC 17023 / DSM 158 / JCM 6121 / CCUG 31486 / LMG 2827 / NBRC 12203 / NCIMB 8253 / ATH 2.4.1.) (Rhodobacter sphaeroides)).